A 350-amino-acid chain; its full sequence is Dihydroorotate dehydrogenase (quinone) (350 aa).

FMN contacts are provided by residues 61 to 65 (AGLDK) and threonine 85. Lysine 65 is a binding site for substrate. 110–114 (NRMGF) lines the substrate pocket. FMN is bound by residues asparagine 139 and asparagine 172. Position 172 (asparagine 172) interacts with substrate. The active-site Nucleophile is the serine 175. Asparagine 177 lines the substrate pocket. 2 residues coordinate FMN: lysine 217 and threonine 245. 246–247 (NT) is a binding site for substrate. FMN is bound by residues glycine 268, glycine 297, and 318-319 (YS).

This sequence belongs to the dihydroorotate dehydrogenase family. Type 2 subfamily. In terms of assembly, monomer. FMN is required as a cofactor.

Its subcellular location is the cell membrane. The enzyme catalyses (S)-dihydroorotate + a quinone = orotate + a quinol. The protein operates within pyrimidine metabolism; UMP biosynthesis via de novo pathway; orotate from (S)-dihydroorotate (quinone route): step 1/1. Catalyzes the conversion of dihydroorotate to orotate with quinone as electron acceptor. The chain is Dihydroorotate dehydrogenase (quinone) from Flavobacterium lutescens.